Consider the following 241-residue polypeptide: tRNA pseudouridine synthase A (241 aa).

Aspartate 51 acts as the Nucleophile in catalysis. Residue tyrosine 110 participates in substrate binding.

It belongs to the tRNA pseudouridine synthase TruA family. In terms of assembly, homodimer.

It carries out the reaction uridine(38/39/40) in tRNA = pseudouridine(38/39/40) in tRNA. Its function is as follows. Formation of pseudouridine at positions 38, 39 and 40 in the anticodon stem and loop of transfer RNAs. The polypeptide is tRNA pseudouridine synthase A (Campylobacter jejuni subsp. doylei (strain ATCC BAA-1458 / RM4099 / 269.97)).